Here is a 261-residue protein sequence, read N- to C-terminus: Proteasome subunit alpha type-4 (261 aa).

2 positions are modified to phosphoserine: S13 and S75. An N6-acetyllysine modification is found at K127. S173 is modified (phosphoserine). At K176 the chain carries N6-acetyllysine. The interval 240-261 (HEEEEAKAEREKKEKEQREKDK) is disordered.

It belongs to the peptidase T1A family. In terms of assembly, the 26S proteasome consists of a 20S proteasome core and two 19S regulatory subunits. The 20S proteasome core is a barrel-shaped complex made of 28 subunits that are arranged in four stacked rings. The two outer rings are each formed by seven alpha subunits, and the two inner rings are formed by seven beta subunits. The proteolytic activity is exerted by three beta-subunits PSMB5, PSMB6 and PSMB7. As to expression, ubiquitous.

It is found in the cytoplasm. The protein localises to the nucleus. In terms of biological role, component of the 20S core proteasome complex involved in the proteolytic degradation of most intracellular proteins. This complex plays numerous essential roles within the cell by associating with different regulatory particles. Associated with two 19S regulatory particles, forms the 26S proteasome and thus participates in the ATP-dependent degradation of ubiquitinated proteins. The 26S proteasome plays a key role in the maintenance of protein homeostasis by removing misfolded or damaged proteins that could impair cellular functions, and by removing proteins whose functions are no longer required. Associated with the PA200 or PA28, the 20S proteasome mediates ubiquitin-independent protein degradation. This type of proteolysis is required in several pathways including spermatogenesis (20S-PA200 complex) or generation of a subset of MHC class I-presented antigenic peptides (20S-PA28 complex). In Rattus norvegicus (Rat), this protein is Proteasome subunit alpha type-4 (Psma4).